Consider the following 643-residue polypeptide: UvrABC system protein C (643 aa).

The 80-residue stretch at alanine 25–valine 104 folds into the GIY-YIG domain. The 36-residue stretch at serine 214–leucine 249 folds into the UVR domain.

This sequence belongs to the UvrC family. In terms of assembly, interacts with UvrB in an incision complex.

The protein resides in the cytoplasm. Functionally, the UvrABC repair system catalyzes the recognition and processing of DNA lesions. UvrC both incises the 5' and 3' sides of the lesion. The N-terminal half is responsible for the 3' incision and the C-terminal half is responsible for the 5' incision. This Synechococcus elongatus (strain ATCC 33912 / PCC 7942 / FACHB-805) (Anacystis nidulans R2) protein is UvrABC system protein C.